Consider the following 1037-residue polypeptide: Ephrin type-A receptor 5 (1037 aa).

The signal sequence occupies residues 1-24 (MRGSGPRGAGRRRPPSGGGDTPIT). The interval 1–24 (MRGSGPRGAGRRRPPSGGGDTPIT) is disordered. Over 25 to 573 (PASLAGCYSA…AASSDQSQIP (549 aa)) the chain is Extracellular. The 179-residue stretch at 60–238 (EVNLLDSRTV…YYKKCPSVVR (179 aa)) folds into the Eph LBD domain. 6 N-linked (GlcNAc...) asparagine glycosylation sites follow: N264, N299, N369, N423, N436, and N461. 2 consecutive Fibronectin type-III domains span residues 357–467 (PPSA…TNQA) and 468–562 (APSP…TTPV). Residues 574–594 (VIAVSVTVGVILLAVVIGVLL) form a helical membrane-spanning segment. The Cytoplasmic segment spans residues 595–1037 (SGSCCECGCG…VQLVNGMVPL (443 aa)). Residues Y650 and Y656 each carry the phosphotyrosine; by autocatalysis modification. The Protein kinase domain maps to 675 to 936 (ITIERVIGAG…EIVNMLDKLI (262 aa)). ATP-binding positions include 681–689 (IGAGEFGEV) and K707. D800 functions as the Proton acceptor in the catalytic mechanism. Phosphotyrosine; by autocatalysis is present on residues Y833 and Y982. The SAM domain occupies 965–1029 (GAYRSVGEWL…MNSLQEMKVQ (65 aa)). Residues 1035 to 1037 (VPL) carry the PDZ-binding motif.

Belongs to the protein kinase superfamily. Tyr protein kinase family. Ephrin receptor subfamily. In terms of assembly, heterotetramer upon binding of the ligand. The heterotetramer is composed of an ephrin dimer and a receptor dimer. Oligomerization is probably required to induce biological responses. Interacts (via SAM domain) with SAMD5 (via SAM domain). Post-translationally, phosphorylated. Phosphorylation is stimulated by the ligand EFNA5. Dephosphorylation upon stimulation by glucose, inhibits EPHA5 forward signaling and results in insulin secretion. In terms of tissue distribution, almost exclusively expressed in the nervous system in cortical neurons, cerebellar Purkinje cells and pyramidal neurons within the cortex and hippocampus. Display an increasing gradient of expression from the forebrain to hindbrain and spinal cord.

Its subcellular location is the cell membrane. The protein localises to the cell projection. The protein resides in the axon. It localises to the dendrite. The enzyme catalyses L-tyrosyl-[protein] + ATP = O-phospho-L-tyrosyl-[protein] + ADP + H(+). Functionally, receptor tyrosine kinase which binds promiscuously GPI-anchored ephrin-A family ligands residing on adjacent cells, leading to contact-dependent bidirectional signaling into neighboring cells. The signaling pathway downstream of the receptor is referred to as forward signaling while the signaling pathway downstream of the ephrin ligand is referred to as reverse signaling. Among GPI-anchored ephrin-A ligands, EFNA5 most probably constitutes the cognate/functional ligand for EPHA5. Functions as an axon guidance molecule during development and may be involved in the development of the retinotectal, entorhino-hippocampal and hippocamposeptal pathways. Together with EFNA5 plays also a role in synaptic plasticity in adult brain through regulation of synaptogenesis. In addition to its function in the nervous system, the interaction of EPHA5 with EFNA5 mediates communication between pancreatic islet cells to regulate glucose-stimulated insulin secretion. This is Ephrin type-A receptor 5 (EPHA5) from Homo sapiens (Human).